The following is a 190-amino-acid chain: Protein soem-1 (190 aa).

The SH2 domain maps to 96 to 190 (YMEQNMNRVE…LVLKNQLKPV (95 aa)).

In terms of assembly, interacts with abl-1. As to expression, expressed in PQR, but not AQR, Q neuroblast descendents.

Its function is as follows. Functions downstream of migratory protein mig-13 and may play a role in the control of Q neuroblast migration during larval development. The chain is Protein soem-1 from Caenorhabditis elegans.